A 457-amino-acid polypeptide reads, in one-letter code: Dihydrolipoyllysine-residue acetyltransferase component of pyruvate dehydrogenase complex, mitochondrial (457 aa).

The N-terminal 30 residues, 1–30 (MLSAALRRRVLAPTHSALRTGFAAHVVRHY), are a transit peptide targeting the mitochondrion. The Lipoyl-binding domain maps to 36-112 (HQVIKMPALS…PVGSPIAVLV (77 aa)). Residue lysine 77 is modified to N6-lipoyllysine. Positions 129-168 (AGGDAAKPAAPKKEEKSESKSESASAPEPTPEPQQYQSQG) are disordered. The segment covering 139–149 (PKKEEKSESKS) has biased composition (basic and acidic residues). Lysine 148 is modified (N6-crotonyllysine). In terms of domain architecture, Peripheral subunit-binding (PSBD) spans 179-216 (NISASAKRLAREKGISIDGLKGTGKNGQITEEDVKKAI). Active-site residues include histidine 430 and aspartate 434.

The protein belongs to the 2-oxoacid dehydrogenase family. In terms of assembly, eukaryotic pyruvate dehydrogenase (PDH) complexes are organized as a core consisting of the oligomeric dihydrolipoamide acetyl-transferase (E2), around which are arranged multiple copies of pyruvate dehydrogenase (E1), dihydrolipoamide dehydrogenase (E3) and protein X (E3BP) bound by non-covalent bonds. Interacts with SIR5; the interaction is direct. Requires (R)-lipoate as cofactor. Post-translationally, decrotonylated at 'Lys-148' by SIR5, which inhibits the activity of the pyruvate dehydrogenase complex (PDC).

The protein resides in the mitochondrion matrix. It catalyses the reaction N(6)-[(R)-dihydrolipoyl]-L-lysyl-[protein] + acetyl-CoA = N(6)-[(R)-S(8)-acetyldihydrolipoyl]-L-lysyl-[protein] + CoA. The pyruvate dehydrogenase complex catalyzes the overall conversion of pyruvate to acetyl-CoA and CO(2). High pyruvate dehydrogenase complex activity is required for sufficient energy production during germination of conidia. This Fusarium oxysporum f. sp. lycopersici (strain 4287 / CBS 123668 / FGSC 9935 / NRRL 34936) (Fusarium vascular wilt of tomato) protein is Dihydrolipoyllysine-residue acetyltransferase component of pyruvate dehydrogenase complex, mitochondrial.